Reading from the N-terminus, the 196-residue chain is Probable malonic semialdehyde reductase RutE (196 aa).

This sequence belongs to the nitroreductase family. HadB/RutE subfamily. The cofactor is FMN.

The catalysed reaction is 3-hydroxypropanoate + NADP(+) = 3-oxopropanoate + NADPH + H(+). Its function is as follows. May reduce toxic product malonic semialdehyde to 3-hydroxypropionic acid, which is excreted. This is Probable malonic semialdehyde reductase RutE from Escherichia coli O139:H28 (strain E24377A / ETEC).